Here is a 213-residue protein sequence, read N- to C-terminus: Proteasome subunit beta 1 (213 aa).

Residues 1 to 18 (MVFIAVFNGVFAMSSLPG) constitute a propeptide, removed in mature form; by autocatalysis. Catalysis depends on Thr-19, which acts as the Nucleophile.

The protein belongs to the peptidase T1B family. In terms of assembly, the 20S proteasome core is composed of 14 alpha and 14 beta subunits that assemble into four stacked heptameric rings, resulting in a barrel-shaped structure. The two inner rings, each composed of seven catalytic beta subunits, are sandwiched by two outer rings, each composed of seven alpha subunits. The catalytic chamber with the active sites is on the inside of the barrel. Has a gated structure, the ends of the cylinder being occluded by the N-termini of the alpha-subunits. Is capped at one or both ends by the proteasome regulatory ATPase, PAN.

Its subcellular location is the cytoplasm. It carries out the reaction Cleavage of peptide bonds with very broad specificity.. The formation of the proteasomal ATPase PAN-20S proteasome complex, via the docking of the C-termini of PAN into the intersubunit pockets in the alpha-rings, triggers opening of the gate for substrate entry. Interconversion between the open-gate and close-gate conformations leads to a dynamic regulation of the 20S proteasome proteolysis activity. Its function is as follows. Component of the proteasome core, a large protease complex with broad specificity involved in protein degradation. The polypeptide is Proteasome subunit beta 1 (Staphylothermus marinus (strain ATCC 43588 / DSM 3639 / JCM 9404 / F1)).